A 239-amino-acid polypeptide reads, in one-letter code: Fumarate reductase iron-sulfur subunit (239 aa).

The 91-residue stretch at 5-95 folds into the 2Fe-2S ferredoxin-type domain; that stretch reads LTIRVFKYDP…DGVITLLPLP (91 aa). Residues Cys57, Cys62, Cys65, and Cys77 each contribute to the [2Fe-2S] cluster site. Residues 142 to 171 enclose the 4Fe-4S ferredoxin-type domain; the sequence is AQEVFELDRCIECGCCIAACGTKIMREDFV. 3 residues coordinate [4Fe-4S] cluster: Cys151, Cys154, and Cys157. 3 residues coordinate [3Fe-4S] cluster: Cys161, Cys208, and Cys214. Residue Cys218 coordinates [4Fe-4S] cluster.

It belongs to the succinate dehydrogenase/fumarate reductase iron-sulfur protein family. In terms of assembly, part of an enzyme complex containing three subunits: a flavoprotein (frdA), an iron-sulfur protein (frdB), and diheme cytochrome b (frdC). Requires [2Fe-2S] cluster as cofactor. [3Fe-4S] cluster serves as cofactor. It depends on [4Fe-4S] cluster as a cofactor.

It is found in the cell inner membrane. It catalyses the reaction a menaquinone + succinate = a menaquinol + fumarate. In terms of biological role, the fumarate reductase enzyme complex is required for fumarate respiration using formate or sulfide as electron donor. The sequence is that of Fumarate reductase iron-sulfur subunit (frdB) from Wolinella succinogenes (strain ATCC 29543 / DSM 1740 / CCUG 13145 / JCM 31913 / LMG 7466 / NCTC 11488 / FDC 602W) (Vibrio succinogenes).